Reading from the N-terminus, the 198-residue chain is Protein GrpE (198 aa).

Residues 1 to 27 (MEERNEQVVEETKEAQTEEATIEKNSE) are compositionally biased toward basic and acidic residues. Residues 1–39 (MEERNEQVVEETKEAQTEEATIEKNSEESVTEEATEETV) form a disordered region. Residues 29–39 (SVTEEATEETV) are compositionally biased toward acidic residues.

It belongs to the GrpE family. In terms of assembly, homodimer.

It is found in the cytoplasm. Participates actively in the response to hyperosmotic and heat shock by preventing the aggregation of stress-denatured proteins, in association with DnaK and GrpE. It is the nucleotide exchange factor for DnaK and may function as a thermosensor. Unfolded proteins bind initially to DnaJ; upon interaction with the DnaJ-bound protein, DnaK hydrolyzes its bound ATP, resulting in the formation of a stable complex. GrpE releases ADP from DnaK; ATP binding to DnaK triggers the release of the substrate protein, thus completing the reaction cycle. Several rounds of ATP-dependent interactions between DnaJ, DnaK and GrpE are required for fully efficient folding. The protein is Protein GrpE of Bacillus cytotoxicus (strain DSM 22905 / CIP 110041 / 391-98 / NVH 391-98).